Reading from the N-terminus, the 106-residue chain is COX assembly mitochondrial protein homolog (106 aa).

A2 carries the N-acetylalanine modification. The CHCH domain maps to K28–P71. 2 short sequence motifs (cx9C motif) span residues C31 to C41 and C53 to C63. 2 disulfides stabilise this stretch: C31/C63 and C41/C53.

It belongs to the CMC family. In terms of assembly, component of the MITRAC (mitochondrial translation regulation assembly intermediate of cytochrome c oxidase complex) complex, the core components of this complex being COA3/MITRAC12 and COX14.

The protein resides in the mitochondrion. Component of the MITRAC (mitochondrial translation regulation assembly intermediate of cytochrome c oxidase complex) complex, that regulates cytochrome c oxidase assembly. The chain is COX assembly mitochondrial protein homolog (CMC1) from Homo sapiens (Human).